The sequence spans 449 residues: Glucose-6-phosphate isomerase (449 aa).

Glu291 (proton donor) is an active-site residue. Catalysis depends on residues His312 and Lys426.

Belongs to the GPI family.

Its subcellular location is the cytoplasm. It catalyses the reaction alpha-D-glucose 6-phosphate = beta-D-fructose 6-phosphate. Its pathway is carbohydrate biosynthesis; gluconeogenesis. It functions in the pathway carbohydrate degradation; glycolysis; D-glyceraldehyde 3-phosphate and glycerone phosphate from D-glucose: step 2/4. Functionally, catalyzes the reversible isomerization of glucose-6-phosphate to fructose-6-phosphate. The protein is Glucose-6-phosphate isomerase of Streptococcus pyogenes serotype M49 (strain NZ131).